The sequence spans 223 residues: Ubiquitin carboxyl-terminal hydrolase isozyme L1 (223 aa).

The residue at position 1 (M1) is an N-acetylmethionine. Positions Q2–K221 constitute a UCH catalytic domain. The segment at P5–P10 is interaction with ubiquitin. Catalysis depends on C90, which acts as the Nucleophile. S125 is subject to Phosphoserine. The active-site Proton donor is H161. Residues E211–A216 are interaction with ubiquitin. The S-farnesyl cysteine moiety is linked to residue C220. The propeptide at K221–A223 is removed in mature form.

Belongs to the peptidase C12 family. In terms of assembly, monomer. Homodimer. Interacts with SNCA. Interacts with COPS5. Post-translationally, O-glycosylated. As to expression, found in neuronal cell bodies and processes throughout the neocortex (at protein level). Expressed in neurons and cells of the diffuse neuroendocrine system and their tumors. Weakly expressed in ovary. Down-regulated in brains from Parkinson disease and Alzheimer disease patients.

It localises to the cytoplasm. The protein localises to the endoplasmic reticulum membrane. The catalysed reaction is Thiol-dependent hydrolysis of ester, thioester, amide, peptide and isopeptide bonds formed by the C-terminal Gly of ubiquitin (a 76-residue protein attached to proteins as an intracellular targeting signal).. Functionally, deubiquitinase that plays a role in the regulation of several processes such as maintenance of synaptic function, cardiac function, inflammatory response or osteoclastogenesis. Abrogates the ubiquitination of multiple proteins including WWTR1/TAZ, EGFR, HIF1A and beta-site amyloid precursor protein cleaving enzyme 1/BACE1. In addition, recognizes and hydrolyzes a peptide bond at the C-terminal glycine of ubiquitin to maintain a stable pool of monoubiquitin that is a key requirement for the ubiquitin-proteasome and the autophagy-lysosome pathways. Regulates amyloid precursor protein/APP processing by promoting BACE1 degradation resulting in decreased amyloid beta production. Plays a role in the immune response by regulating the ability of MHC I molecules to reach cross-presentation compartments competent for generating Ag-MHC I complexes. Mediates the 'Lys-48'-linked deubiquitination of the transcriptional coactivator WWTR1/TAZ leading to its stabilization and inhibition of osteoclastogenesis. Deubiquitinates and stabilizes epidermal growth factor receptor EGFR to prevent its degradation and to activate its downstream mediators. Modulates oxidative activity in skeletal muscle by regulating key mitochondrial oxidative proteins. Enhances the activity of hypoxia-inducible factor 1-alpha/HIF1A by abrogateing its VHL E3 ligase-mediated ubiquitination and consequently inhibiting its degradation. The polypeptide is Ubiquitin carboxyl-terminal hydrolase isozyme L1 (UCHL1) (Homo sapiens (Human)).